The sequence spans 98 residues: Aspartyl/glutamyl-tRNA(Asn/Gln) amidotransferase subunit C (98 aa).

This sequence belongs to the GatC family. Heterotrimer of A, B and C subunits.

The enzyme catalyses L-glutamyl-tRNA(Gln) + L-glutamine + ATP + H2O = L-glutaminyl-tRNA(Gln) + L-glutamate + ADP + phosphate + H(+). It carries out the reaction L-aspartyl-tRNA(Asn) + L-glutamine + ATP + H2O = L-asparaginyl-tRNA(Asn) + L-glutamate + ADP + phosphate + 2 H(+). In terms of biological role, allows the formation of correctly charged Asn-tRNA(Asn) or Gln-tRNA(Gln) through the transamidation of misacylated Asp-tRNA(Asn) or Glu-tRNA(Gln) in organisms which lack either or both of asparaginyl-tRNA or glutaminyl-tRNA synthetases. The reaction takes place in the presence of glutamine and ATP through an activated phospho-Asp-tRNA(Asn) or phospho-Glu-tRNA(Gln). This is Aspartyl/glutamyl-tRNA(Asn/Gln) amidotransferase subunit C from Bifidobacterium adolescentis (strain ATCC 15703 / DSM 20083 / NCTC 11814 / E194a).